The primary structure comprises 251 residues: Prolactin-7B1 (251 aa).

Residues 1 to 29 form the signal peptide; that stretch reads MNTSLTQLCFWALQILLMSNLLLWEDVVS. Residues Asn2 and Asn73 are each glycosylated (N-linked (GlcNAc...) asparagine). Intrachain disulfides connect Cys100–Cys216 and Cys233–Cys241.

Belongs to the somatotropin/prolactin family. Expression restricted to placenta. Abundantly expressed in trophoblast cells of the junctional zone and trophoblasts migrating into the mesometrial decidua.

It is found in the secreted. The protein is Prolactin-7B1 (Prl7b1) of Mus musculus (Mouse).